Reading from the N-terminus, the 862-residue chain is Glucans biosynthesis glucosyltransferase H (862 aa).

Positions 1–25 (MELPATSGLNAQPGNAEGTTASTRP) are disordered. Residues 7–25 (SGLNAQPGNAEGTTASTRP) show a composition bias toward polar residues. A run of 5 helical transmembrane segments spans residues 188–210 (RLTL…SSVL), 545–567 (GVMA…ALLA), 597–619 (ALFS…VLWA), 626–648 (GGAV…AAPV), and 708–730 (FLWW…VFSS).

Belongs to the glycosyltransferase 2 family. OpgH subfamily.

The protein localises to the cell inner membrane. Its pathway is glycan metabolism; osmoregulated periplasmic glucan (OPG) biosynthesis. Involved in the biosynthesis of osmoregulated periplasmic glucans (OPGs). In Ralstonia nicotianae (strain ATCC BAA-1114 / GMI1000) (Ralstonia solanacearum), this protein is Glucans biosynthesis glucosyltransferase H.